Reading from the N-terminus, the 126-residue chain is Fluoride-specific ion channel FluC (126 aa).

4 helical membrane-spanning segments follow: residues 3–23 (LSIL…WFLG), 35–55 (LGTL…VAYF), 68–88 (FIIT…AEVV), and 103–123 (IAIH…TVAV). Na(+) is bound by residues G75 and S78.

The protein belongs to the fluoride channel Fluc/FEX (TC 1.A.43) family.

The protein localises to the cell inner membrane. The catalysed reaction is fluoride(in) = fluoride(out). Na(+) is not transported, but it plays an essential structural role and its presence is essential for fluoride channel function. Fluoride-specific ion channel. Important for reducing fluoride concentration in the cell, thus reducing its toxicity. This Paraburkholderia phymatum (strain DSM 17167 / CIP 108236 / LMG 21445 / STM815) (Burkholderia phymatum) protein is Fluoride-specific ion channel FluC.